A 329-amino-acid chain; its full sequence is GTP 3',8-cyclase (329 aa).

The Radical SAM core domain maps to 8–234; sequence AFARKYYYLR…QLRQRSDGPA (227 aa). A GTP-binding site is contributed by Arg-17. Residues Cys-24 and Cys-28 each contribute to the [4Fe-4S] cluster site. Tyr-30 is an S-adenosyl-L-methionine binding site. Cys-31 lines the [4Fe-4S] cluster pocket. Residue Arg-68 participates in GTP binding. S-adenosyl-L-methionine is bound at residue Gly-72. Thr-99 serves as a coordination point for GTP. Ser-123 serves as a coordination point for S-adenosyl-L-methionine. Lys-160 contributes to the GTP binding site. Met-194 lines the S-adenosyl-L-methionine pocket. The [4Fe-4S] cluster site is built by Cys-257 and Cys-260. GTP is bound at residue 262-264; that stretch reads RLR. Cys-274 provides a ligand contact to [4Fe-4S] cluster.

It belongs to the radical SAM superfamily. MoaA family. Monomer and homodimer. [4Fe-4S] cluster is required as a cofactor.

The catalysed reaction is GTP + AH2 + S-adenosyl-L-methionine = (8S)-3',8-cyclo-7,8-dihydroguanosine 5'-triphosphate + 5'-deoxyadenosine + L-methionine + A + H(+). It participates in cofactor biosynthesis; molybdopterin biosynthesis. In terms of biological role, catalyzes the cyclization of GTP to (8S)-3',8-cyclo-7,8-dihydroguanosine 5'-triphosphate. The polypeptide is GTP 3',8-cyclase (Escherichia coli O17:K52:H18 (strain UMN026 / ExPEC)).